Consider the following 159-residue polypeptide: Peptide deformylase (159 aa).

Positions 88 and 130 each coordinate Fe cation. The active site involves glutamate 131. Residue histidine 134 participates in Fe cation binding.

It belongs to the polypeptide deformylase family. It depends on Fe(2+) as a cofactor.

The enzyme catalyses N-terminal N-formyl-L-methionyl-[peptide] + H2O = N-terminal L-methionyl-[peptide] + formate. In terms of biological role, removes the formyl group from the N-terminal Met of newly synthesized proteins. Requires at least a dipeptide for an efficient rate of reaction. N-terminal L-methionine is a prerequisite for activity but the enzyme has broad specificity at other positions. The chain is Peptide deformylase from Caldanaerobacter subterraneus subsp. tengcongensis (strain DSM 15242 / JCM 11007 / NBRC 100824 / MB4) (Thermoanaerobacter tengcongensis).